The following is a 122-amino-acid chain: Large ribosomal subunit protein uL14c (122 aa).

It belongs to the universal ribosomal protein uL14 family. As to quaternary structure, part of the 50S ribosomal subunit.

The protein resides in the plastid. Its subcellular location is the chloroplast. Binds to 23S rRNA. This Lemna minor (Common duckweed) protein is Large ribosomal subunit protein uL14c.